Consider the following 563-residue polypeptide: Pyruvate decarboxylase isozyme 3 (563 aa).

Ser2 bears the N-acetylserine mark. 2 residues coordinate pyruvate: Asp28 and His115. Lys212 participates in a covalent cross-link: Glycyl lysine isopeptide (Lys-Gly) (interchain with G-Cter in ubiquitin). Phosphoserine is present on Ser223. A Glycyl lysine isopeptide (Lys-Gly) (interchain with G-Cter in ubiquitin) cross-link involves residue Lys233. Thr266 carries the phosphothreonine modification. Residue Lys269 forms a Glycyl lysine isopeptide (Lys-Gly) (interchain with G-Cter in ubiquitin) linkage. At Thr353 the chain carries Phosphothreonine. Thiamine diphosphate-binding positions include Thr390 and 413–415; that span reads GSI. Mg(2+) is bound at residue Asp444. Residues 445-446 and 471-476 each bind thiamine diphosphate; these read GS and NDGYTI. Residues Asn471 and Gly473 each coordinate Mg(2+). Glu477 contacts pyruvate. Lys505 is covalently cross-linked (Glycyl lysine isopeptide (Lys-Gly) (interchain with G-Cter in ubiquitin)). Thr522 is subject to Phosphothreonine.

Belongs to the TPP enzyme family. Homotetramer. Mg(2+) serves as cofactor. Thiamine diphosphate is required as a cofactor.

Its subcellular location is the cytoplasm. The enzyme catalyses pyruvate + H(+) = acetaldehyde + CO2. The catalysed reaction is 3-methyl-2-oxobutanoate + H(+) = 2-methylpropanal + CO2. It catalyses the reaction (S)-3-methyl-2-oxopentanoate + H(+) = 2-methylbutanal + CO2. It carries out the reaction indole-3-pyruvate + H(+) = indole-3-acetaldehyde + CO2. The enzyme catalyses 3-phenylpyruvate + H(+) = 2-phenylacetaldehyde + CO2. The catalysed reaction is 2-oxobutanoate + H(+) = propanal + CO2. It catalyses the reaction 2-oxopentanoate + H(+) = butanal + CO2. It carries out the reaction 2 acetaldehyde = acetoin. The enzyme catalyses acetaldehyde + pyruvate + H(+) = acetoin + CO2. Its pathway is fermentation; ethanol fermentation. It functions in the pathway amino-acid degradation; Ehrlich pathway. Its function is as follows. Minor of three pyruvate decarboxylases (PDC1, PDC5, PDC6) implicated in the nonoxidative conversion of pyruvate to acetaldehyde and carbon dioxide during alcoholic fermentation. Most of the produced acetaldehyde is subsequently reduced to ethanol, but some is required for cytosolic acetyl-CoA production for biosynthetic pathways. The enzyme is also one of five 2-oxo acid decarboxylases (PDC1, PDC5, PDC6, ARO10, and THI3) able to decarboxylate more complex 2-oxo acids (alpha-keto-acids) than pyruvate, which seem mainly involved in amino acid catabolism. Here the enzyme catalyzes the decarboxylation of amino acids, which, in a first step, have been transaminated to the corresponding 2-oxo acids. In a third step, the resulting aldehydes are reduced to alcohols, collectively referred to as fusel oils or alcohols. Its preferred substrates are the transaminated amino acids derived from threonine (2-oxobutanoate), norvaline (2-oxopentanoate), valine (3-methyl-2-oxobutanoate, also alpha-keto-isovalerate), isoleucine ((3S)-3-methyl-2-oxopentanoate, also alpha-keto-beta-methylvalerate), phenylalanine (phenylpyruvate), and tryptophan (3-(indol-3-yl)pyruvate), whereas transaminated leucine is no substrate. In a side-reaction the carbanionic intermediate (or active aldehyde) generated by decarboxylation or by activation of an aldehyde can react with an aldehyde via condensation (or carboligation) yielding a 2-hydroxy ketone, collectively called acyloins. The expression level of this protein in the presence of fermentable carbon sources is so low that it cannot compensate for the other two pyruvate decarboxylases to sustain fermentation. The chain is Pyruvate decarboxylase isozyme 3 (PDC6) from Saccharomyces cerevisiae (strain ATCC 204508 / S288c) (Baker's yeast).